Reading from the N-terminus, the 597-residue chain is Histidine protein kinase DivJ (597 aa).

A run of 6 helical transmembrane segments spans residues 40–57, 62–81, 91–109, 110–125, 137–158, and 159–188; these read LGWL…LFTA, WPVW…SLIF, WLLV…LTGG, VGGA…VAAA, GAAL…GLAP, and AAPT…LLIG. Residues 335–553 enclose the Histidine kinase domain; that stretch reads NMSHELRTPL…TVSVRLPVLL (219 aa). His338 carries the phosphohistidine; by autocatalysis modification. A compositionally biased stretch (pro residues) spans 561–585; it reads PTPPAAPEAPSAPEPAPTVEEPPPA. A disordered region spans residues 561 to 597; the sequence is PTPPAAPEAPSAPEPAPTVEEPPPASLGDNVIAFAPR.

It localises to the cell membrane. It carries out the reaction ATP + protein L-histidine = ADP + protein N-phospho-L-histidine.. Functionally, kinase required for the regulation of cell division and differentiation. Is part of a signal transduction pathway, activating PleD by phosphorylation. In Caulobacter vibrioides (strain ATCC 19089 / CIP 103742 / CB 15) (Caulobacter crescentus), this protein is Histidine protein kinase DivJ (divJ).